Reading from the N-terminus, the 2465-residue chain is Serine/threonine-protein kinase TOR (2465 aa).

11 HEAT repeats span residues 184–221 (VHVP…VIEK), 271–308 (SRYR…FLRD), 348–389 (AELV…AMGP), 549–587 (RLVE…FDDF), 588–625 (LAQA…KNPA), 717–755 (QYLP…STGY), 761–799 (NEYP…LDPH), 888–926 (PYLP…IVRQ), 981–1018 (MYIL…VFGG), 1022–1059 (EHMH…TVQV), and 1061–1098 (THVS…ALGE). Positions 1158–1191 (DFGGVPSEEADETQRQPRSHQVNDVRLRSAGEAS) are disordered. Residues 1297-1877 (LLGALAEKCR…MYPLLVACKS (581 aa)) form the FAT domain. The PI3K/PI4K catalytic domain occupies 2051–2369 (FVPQLIVITS…PPRGAREREL (319 aa)). The interval 2057–2063 (VITSKQR) is G-loop. The segment at 2230-2238 (GLGDRHPSN) is catalytic loop. An activation loop region spans residues 2250–2275 (HIDFGDCFEASMNREKFPEKVPFRLT). Positions 2401-2431 (RDFSSGSSLSGAGSSTQHGNEHLASGDTREV) are disordered. Low complexity predominate over residues 2404–2415 (SSGSSLSGAGSS). The 33-residue stretch at 2433–2465 (PGLSVKVQVQRLILQATSHENLCQNYVGWCPFW) folds into the FATC domain.

The protein belongs to the PI3/PI4-kinase family. As to quaternary structure, the target of rapamycin complex 1 (TORC1) is composed of at least RAPTOR, LST8 and TOR.

The enzyme catalyses L-seryl-[protein] + ATP = O-phospho-L-seryl-[protein] + ADP + H(+). It carries out the reaction L-threonyl-[protein] + ATP = O-phospho-L-threonyl-[protein] + ADP + H(+). With respect to regulation, insensitive to inhibition by rapamycin. Functionally, component of TORC1 complex, which is an essential cell growth regulator that controls plant development. Acts through the phosphorylation of downstream effectors that are recruited by the binding partner RAPTOR. Acts by activating transcription, protein synthesis and ribosome biogenesis, and inhibiting mRNA degradation and autophagy. The chain is Serine/threonine-protein kinase TOR from Oryza sativa subsp. japonica (Rice).